A 205-amino-acid chain; its full sequence is Non-specific lipid transfer protein GPI-anchored 13 (205 aa).

The signal sequence occupies residues 1-24; it reads MESRKIKVMATAIALIMVAMVVDA. Cystine bridges form between cysteine 36/cysteine 77, cysteine 46/cysteine 61, cysteine 62/cysteine 104, and cysteine 75/cysteine 113. 3 N-linked (GlcNAc...) asparagine glycosylation sites follow: asparagine 93, asparagine 137, and asparagine 165. The segment at 141-176 is disordered; it reads SASAPTGSASEPTSMSSTPGSSAGNNSGRTTSVPGT. Residue asparagine 177 is the site of GPI-anchor amidated asparagine attachment. The propeptide at 178-205 is removed in mature form; it reads HAQSFSKQWLGLEVVAHFFVIFYIFILV.

Belongs to the plant LTP family. In terms of tissue distribution, expressed preferentially in expanding leaves and sepals, restricted to the distal side. Expressed at low levels in roots and stems.

The protein localises to the cell membrane. Probable lipid transfer protein. The polypeptide is Non-specific lipid transfer protein GPI-anchored 13 (Arabidopsis thaliana (Mouse-ear cress)).